Reading from the N-terminus, the 1579-residue chain is MSRQFPHSSAPLRSVKEVQFGLLSPEEVRAISVAKIEYPETMDQATKRPREGGLNDPRLGSIDRNFKCQTCGEDMAECPGHFGHIELAKPVFHIGFIAKIKKVCECVCMHCGKLLLDESNPAMAQAIRIRDPKKRFNAVWNLCKGKMICEADVLQDDGEGNEPKRTSRGGCGHTQPVVRKDGLKLWGTWKQNKNYDETEQPERRLLTPSEILNVFKHINSEDCVRLGFNEDYARPEWMLITVLPVPPPPVRPSIAFNDTARGEDDLTFKLADVIKANINVQRLELDGSPQHVISEFEALLQFHVATYMDNDIAGQPQALQKTGRPIKSIRARLKGKEGRLRGNLMGKRVDFSARTVISGDPNLDLDQVGVPISIARTLTYPEIVTPYNIHRLTEYVRNGPNEHPGAKYVIRDTGDRIDLRYNKRAGDIALQYGWKVERHLMDDDPVLFNRQPSLHKMSMMCHRVKVMPYSTFRLNLSVTSPYNADFDGDEMNLHVPQSPETRAELSEICAVPLQIVSPQSNKPVMGIVQDTLCGVRKMTLRDIFIEYDQVMNMLYWIPDWDGVIPPMNLKDLNNVKQMVVSGSKGSFINISQMSACVGQQIVEGKRIPFGFADRSLPHFTKDDYSPESKGFVENSYLRGLTPQEFFFHAMAGREGLIDTAVKTAETGYIQRRLVKALEDIMVHYDGTTRNSLGDIIQFVYGEDGVDGTQVESQSVDVIPGTDESFERRYRVDLLDPEKCIRDSLLESGKEVRGDVNLQRVLDEEYEQLCNDRRYLREVCFTNGDYTWPLPVNLRRIIQNAQQLFHGGRHKASDLRLEEIVEGVKELCKKLLVLRGDSPLVKESQENATLLFQCLVRSRLATRRVIEEFRLNRMSFEWAMGEIETQFQKSLVHPGEMVGVIAAQSIGEPATQMTLNTFHYAGVSSKNVTLGVPRLKEILNVAKNIKTPALTVYLEKDIAADIEKAKVVQSAIEHTTLKNVTASTEIFYDPDPRSTVLEEDYDTVEAYFAIPDEKVEESIEKQSPWLLRLELDRAKMLDKQLTMAQVAEKISQNFGEDLFVIWSDDTADKLIIRCRVVRDPKSLDEDVDAEEDQILKRIEAHMLESISLRGIQGITRVFMMQHKLSLPDETGEFKQGQEWVLETDGVNLADVMAVPGVDAKRTYSNNFIEILSVLGIEATRSALFKEILNVIAFDGSYVNYRHMALLVDVMTARGHLMAITRHGINRADTGALMRCSFEETVEILLEAGAAAELDDCHGISENVVLGQLAPLGTGAFDVMVDDKILQSSPSNMSVPVGAAEGAGAYADDGGATPYREYDMEDDKIQFEEGAGFSPIHTAPVSDGAGALTAYGGQPGSPSPTSPFAYGATSPAYGGASPGYGVTSPTYSPTSPSYSPTSPSYSPTSPSYSPTSPSYSPTSPSYSPTSPSYSPTSPSYSPTSPSYSPTSPSYSPTSPSYSPTSPSYSPTSPSYSPTSPSYSPTSPSYSPTSPSYSPTSPSYSPTSPLYSPTSPSYSPTSPSYSPTSPSYSPTSPSYSPTSPQYSPTSPAYSPTSPQYSPNSPQYSPRSPLYSPDQNDDKDKKQ.

Zn(2+) contacts are provided by Cys68, Cys71, Cys78, His81, Cys108, Cys111, Cys149, and Cys171. Mg(2+) contacts are provided by Asp485, Asp487, and Asp489. The bridging helix stretch occupies residues 642-654; the sequence is PQEFFFHAMAGRE. Lys1080 participates in a covalent cross-link: Glycyl lysine isopeptide (Lys-Gly) (interchain with G-Cter in ubiquitin). Residues 1382–1565 show a composition bias toward low complexity; the sequence is SPTYSPTSPS…NSPQYSPRSP (184 aa). A disordered region spans residues 1382–1579; that stretch reads SPTYSPTSPS…DQNDDKDKKQ (198 aa). A run of 16 repeats spans residues 1385–1391, 1392–1398, 1399–1405, 1406–1412, 1413–1419, 1420–1426, 1427–1433, 1434–1440, 1441–1447, 1448–1454, 1455–1461, 1462–1468, 1469–1475, 1476–1482, 1483–1489, and 1490–1496. The segment at 1385 to 1566 is C-terminal domain (CTD); 26 X 7 AA approximate tandem repeats of Y-S-P-T-S-P-[S-A-Q]; it reads YSPTSPSYSP…SPQYSPRSPL (182 aa). Residues 1497 to 1503 form a 17; approximate repeat; that stretch reads YSPTSPL. Repeat copies occupy residues 1504–1510, 1511–1517, 1518–1524, 1525–1531, 1532–1538, 1539–1545, and 1546–1552. Residues 1553–1559 form a 25; approximate repeat; the sequence is YSPNSPQ. Residues 1560-1566 form a 26; approximate repeat; the sequence is YSPRSPL.

Belongs to the RNA polymerase beta' chain family. As to quaternary structure, component of the RNA polymerase II (Pol II) complex consisting of 12 subunits. In terms of processing, the tandem 7 residues repeats in the C-terminal domain (CTD) can be highly phosphorylated. The phosphorylation activates Pol II. Phosphorylation occurs mainly at residues 'Ser-2' and 'Ser-5' of the heptapeptide repeat. The phosphorylation state is believed to result from the balanced action of site-specific CTD kinases and phosphatase, and a 'CTD code' that specifies the position of Pol II within the transcription cycle has been proposed. Post-translationally, following transcription stress, the elongating form of RNA polymerase II (RNA pol IIo) is polyubiquitinated via 'Lys-63'-linkages on Lys-1080 at DNA damage sites without leading to degradation: ubiquitination promotes RNA pol IIo backtracking to allow access by the transcription-coupled nucleotide excision repair (TC-NER) machinery. Subsequent DEF1-dependent polyubiquitination by the elongin complex via 'Lys-48'-linkages may lead to proteasome-mediated degradation; presumably at stalled RNA pol II where TC-NER has failed, to halt global transcription and enable 'last resort' DNA repair pathways.

The protein localises to the nucleus. The enzyme catalyses RNA(n) + a ribonucleoside 5'-triphosphate = RNA(n+1) + diphosphate. DNA-dependent RNA polymerase catalyzes the transcription of DNA into RNA using the four ribonucleoside triphosphates as substrates. Largest and catalytic component of RNA polymerase II which synthesizes mRNA precursors and many functional non-coding RNAs. Forms the polymerase active center together with the second largest subunit. Pol II is the central component of the basal RNA polymerase II transcription machinery. It is composed of mobile elements that move relative to each other. RPB1 is part of the core element with the central large cleft, the clamp element that moves to open and close the cleft and the jaws that are thought to grab the incoming DNA template. At the start of transcription, a single-stranded DNA template strand of the promoter is positioned within the central active site cleft of Pol II. A bridging helix emanates from RPB1 and crosses the cleft near the catalytic site and is thought to promote translocation of Pol II by acting as a ratchet that moves the RNA-DNA hybrid through the active site by switching from straight to bent conformations at each step of nucleotide addition. During transcription elongation, Pol II moves on the template as the transcript elongates. Elongation is influenced by the phosphorylation status of the C-terminal domain (CTD) of Pol II largest subunit (RPB1), which serves as a platform for assembly of factors that regulate transcription initiation, elongation, termination and mRNA processing. In Meyerozyma guilliermondii (strain ATCC 6260 / CBS 566 / DSM 6381 / JCM 1539 / NBRC 10279 / NRRL Y-324) (Yeast), this protein is DNA-directed RNA polymerase II subunit RPB1 (RPB1).